The chain runs to 130 residues: Transcription antitermination protein NusB (130 aa).

Belongs to the NusB family.

Involved in transcription antitermination. Required for transcription of ribosomal RNA (rRNA) genes. Binds specifically to the boxA antiterminator sequence of the ribosomal RNA (rrn) operons. This Geobacillus kaustophilus (strain HTA426) protein is Transcription antitermination protein NusB.